We begin with the raw amino-acid sequence, 365 residues long: UDP-N-acetylglucosamine--N-acetylmuramyl-(pentapeptide) pyrophosphoryl-undecaprenol N-acetylglucosamine transferase (365 aa).

UDP-N-acetyl-alpha-D-glucosamine is bound by residues 13-15 (TGG), Asn-125, Arg-165, Ser-192, and Gln-293.

The protein belongs to the glycosyltransferase 28 family. MurG subfamily.

Its subcellular location is the cell inner membrane. It catalyses the reaction di-trans,octa-cis-undecaprenyl diphospho-N-acetyl-alpha-D-muramoyl-L-alanyl-D-glutamyl-meso-2,6-diaminopimeloyl-D-alanyl-D-alanine + UDP-N-acetyl-alpha-D-glucosamine = di-trans,octa-cis-undecaprenyl diphospho-[N-acetyl-alpha-D-glucosaminyl-(1-&gt;4)]-N-acetyl-alpha-D-muramoyl-L-alanyl-D-glutamyl-meso-2,6-diaminopimeloyl-D-alanyl-D-alanine + UDP + H(+). Its pathway is cell wall biogenesis; peptidoglycan biosynthesis. In terms of biological role, cell wall formation. Catalyzes the transfer of a GlcNAc subunit on undecaprenyl-pyrophosphoryl-MurNAc-pentapeptide (lipid intermediate I) to form undecaprenyl-pyrophosphoryl-MurNAc-(pentapeptide)GlcNAc (lipid intermediate II). This is UDP-N-acetylglucosamine--N-acetylmuramyl-(pentapeptide) pyrophosphoryl-undecaprenol N-acetylglucosamine transferase from Ruegeria pomeroyi (strain ATCC 700808 / DSM 15171 / DSS-3) (Silicibacter pomeroyi).